Consider the following 345-residue polypeptide: Probable glucan endo-1,3-beta-glucosidase BG4 (345 aa).

An N-terminal signal peptide occupies residues M1–S22. N-linked (GlcNAc...) asparagine glycosylation is found at N23 and N119. The active-site Proton donor is the E128. The active-site Nucleophile is E267. N277 and N306 each carry an N-linked (GlcNAc...) asparagine glycan.

It belongs to the glycosyl hydrolase 17 family.

The protein resides in the secreted. The catalysed reaction is Hydrolysis of (1-&gt;3)-beta-D-glucosidic linkages in (1-&gt;3)-beta-D-glucans.. Its function is as follows. May play a role in plant defense against pathogens. The polypeptide is Probable glucan endo-1,3-beta-glucosidase BG4 (Arabidopsis thaliana (Mouse-ear cress)).